A 237-amino-acid polypeptide reads, in one-letter code: Segregation and condensation protein A (237 aa).

Belongs to the ScpA family. Component of a cohesin-like complex composed of ScpA, ScpB and the Smc homodimer, in which ScpA and ScpB bind to the head domain of Smc. The presence of the three proteins is required for the association of the complex with DNA.

It is found in the cytoplasm. Its function is as follows. Participates in chromosomal partition during cell division. May act via the formation of a condensin-like complex containing Smc and ScpB that pull DNA away from mid-cell into both cell halves. In Streptococcus thermophilus (strain CNRZ 1066), this protein is Segregation and condensation protein A.